Consider the following 365-residue polypeptide: UDP-N-acetylglucosamine--N-acetylmuramyl-(pentapeptide) pyrophosphoryl-undecaprenol N-acetylglucosamine transferase (365 aa).

Residues 10-12, asparagine 124, arginine 161, serine 195, isoleucine 248, and glutamine 292 each bind UDP-N-acetyl-alpha-D-glucosamine; that span reads TAG.

The protein belongs to the glycosyltransferase 28 family. MurG subfamily.

Its subcellular location is the cell membrane. The catalysed reaction is di-trans,octa-cis-undecaprenyl diphospho-N-acetyl-alpha-D-muramoyl-L-alanyl-D-glutamyl-meso-2,6-diaminopimeloyl-D-alanyl-D-alanine + UDP-N-acetyl-alpha-D-glucosamine = di-trans,octa-cis-undecaprenyl diphospho-[N-acetyl-alpha-D-glucosaminyl-(1-&gt;4)]-N-acetyl-alpha-D-muramoyl-L-alanyl-D-glutamyl-meso-2,6-diaminopimeloyl-D-alanyl-D-alanine + UDP + H(+). Its pathway is cell wall biogenesis; peptidoglycan biosynthesis. Functionally, cell wall formation. Catalyzes the transfer of a GlcNAc subunit on undecaprenyl-pyrophosphoryl-MurNAc-pentapeptide (lipid intermediate I) to form undecaprenyl-pyrophosphoryl-MurNAc-(pentapeptide)GlcNAc (lipid intermediate II). This chain is UDP-N-acetylglucosamine--N-acetylmuramyl-(pentapeptide) pyrophosphoryl-undecaprenol N-acetylglucosamine transferase, found in Nocardioides sp. (strain ATCC BAA-499 / JS614).